The following is a 1386-amino-acid chain: MEVLMAERADLVYHNKAIDGTAMKRLISRLIDHFGMAYTSHILDQVKTLGFRQATATSISLGIDDLLTIPSKGWLVQDAEQQSFILEKHHSYGNVHAVEKLRQSIEIWYATSEYLRQEMNPNFRMTDPSNPVHIMSFSGARGNASQVHQLVGMRGLMSDPQGQMIDLPIQSNLREGLSLTEYIISCYGARKGVVDTAVRTSDAGYLTRRLVEVVQHIVVRRTDCGTIRGISVQPRNGMTERMFFQTLIGRVLADDVYIGLRCIAARNQDIGIGLVNRFITFRAQPVYIRTPFTCRSTSWICQLCYGRSPTHGDLVELGEAVGIIAGQSIGEPGTQLTLRTFHTGGVFTGGTAEHVRAPSNGKIKFNEELVHPTRTRHGHPAFLCSIDLYVTVEGRDIIHNVNIPPKSLILVQNDQYVESEQVIAEIRAGTSTFNFKERVQKHIYSESAGEMHWSTDVYHAPEYTYGNVHLLPKTSHLWILSGGPYRSSIVSSSLHKDQDQTNAHSFSVERRYISDLSMTNGRVRHKLFSSDLSGKRGDRILDYSRPDQIISKGHWNFIYPSILHENSDFLAKRRKNRFIIPFQYDQEGEKELIPHSGISIEIPINGMLRRNSILAYFDDTRYRRSSSGITKYGTVEIDSIVKKEDFIEYRGTKEFSSKYQMKVDRFFFIPEEVHILPGSSSIMVRNNSLIGVDTRITLNIRSRVGGLVRVERKKKNIELKIVSGDIHFPGETDKISRHSGILIPPGTEKKNSKESKTKLKNWIYVQRITPTKKKYFVLVRPVATYEIADGINLATLFPQDLLQERDNVQLRVVNYILYGNGKPIRGISHTSIQLVRTCLVLNWDQEQNGSIEGVRASFVEVRANDLIRDFIRIELCKSAILYTGKRKDIAGSGLIHDNVSDRTNINPVYLKDKIPSFIQHQGTVGTLLNRNKECQSLILLSSSNCFRIGPFNGSKYHNVPKESIKEDPIIPIRDSLGLLGTTVPKIANFFYLSYHVITHNHILLTKYLLRDHLKQAFQVLRYCLMDENRRIYNPDPCSNIIFNAFDLNWRFLHHDYSEETSTILSLGQFVCENVCLFKHGPQIKSGQVIIVHVDSFVIRAAKPYLATPGATVHGHYGEILYGGDTLITFIYEKSRSGDITQGLPKVEQVLEVRSIDSISTNLEKRVEGWNEHITKILGIPWGFLIGAELTIAQSRISLVNKIQKVYRSQGVQIHNKHIEIIVRQITSKVLVSEDGMSNVFSPGELIGLLRAERTGRALEEAICYRAILLGITRASLNTQSFISEASFQETARVLAKAALRGRVDWLKGLKENVVLGAMIPVGTGFKALVHRSRKPNNIHLEIKKNNLFEGQVGDDILFYHRELFGSCGPNNFHDTSEQSFMKFHDS.

Zn(2+)-binding residues include Cys-224, Cys-294, Cys-301, and Cys-304.

The protein belongs to the RNA polymerase beta' chain family. RpoC2 subfamily. As to quaternary structure, in plastids the minimal PEP RNA polymerase catalytic core is composed of four subunits: alpha, beta, beta', and beta''. When a (nuclear-encoded) sigma factor is associated with the core the holoenzyme is formed, which can initiate transcription. Zn(2+) is required as a cofactor.

It localises to the plastid. The protein localises to the chloroplast. It carries out the reaction RNA(n) + a ribonucleoside 5'-triphosphate = RNA(n+1) + diphosphate. In terms of biological role, DNA-dependent RNA polymerase catalyzes the transcription of DNA into RNA using the four ribonucleoside triphosphates as substrates. The sequence is that of DNA-directed RNA polymerase subunit beta'' from Acorus calamus (Sweet flag).